Consider the following 314-residue polypeptide: 1D-myo-inositol 2-acetamido-2-deoxy-alpha-D-glucopyranoside deacetylase 2 (314 aa).

Residues His25, Asp28, and His161 each coordinate Zn(2+).

This sequence belongs to the MshB deacetylase family. The cofactor is Zn(2+).

It carries out the reaction 1D-myo-inositol 2-acetamido-2-deoxy-alpha-D-glucopyranoside + H2O = 1D-myo-inositol 2-amino-2-deoxy-alpha-D-glucopyranoside + acetate. In terms of biological role, catalyzes the deacetylation of 1D-myo-inositol 2-acetamido-2-deoxy-alpha-D-glucopyranoside (GlcNAc-Ins) in the mycothiol biosynthesis pathway. In Frankia casuarinae (strain DSM 45818 / CECT 9043 / HFP020203 / CcI3), this protein is 1D-myo-inositol 2-acetamido-2-deoxy-alpha-D-glucopyranoside deacetylase 2.